The following is a 100-amino-acid chain: Urease subunit gamma (100 aa).

The protein belongs to the urease gamma subunit family. In terms of assembly, heterotrimer of UreA (gamma), UreB (beta) and UreC (alpha) subunits. Three heterotrimers associate to form the active enzyme.

The protein resides in the cytoplasm. The enzyme catalyses urea + 2 H2O + H(+) = hydrogencarbonate + 2 NH4(+). The protein operates within nitrogen metabolism; urea degradation; CO(2) and NH(3) from urea (urease route): step 1/1. This Burkholderia orbicola (strain MC0-3) protein is Urease subunit gamma.